The following is a 570-amino-acid chain: Urease subunit alpha (570 aa).

Residues 131 to 570 (GGMDSHIHFI…LPMAQRYFLF (440 aa)) form the Urease domain. Residues His-136, His-138, and Lys-219 each contribute to the Ni(2+) site. An N6-carboxylysine modification is found at Lys-219. Residue His-221 coordinates substrate. Residues His-248 and His-274 each coordinate Ni(2+). His-322 (proton donor) is an active-site residue. Asp-362 contributes to the Ni(2+) binding site.

Belongs to the metallo-dependent hydrolases superfamily. Urease alpha subunit family. In terms of assembly, heterotrimer of UreA (gamma), UreB (beta) and UreC (alpha) subunits. Three heterotrimers associate to form the active enzyme. Ni cation serves as cofactor. Post-translationally, carboxylation allows a single lysine to coordinate two nickel ions.

The protein localises to the cytoplasm. It catalyses the reaction urea + 2 H2O + H(+) = hydrogencarbonate + 2 NH4(+). Its pathway is nitrogen metabolism; urea degradation; CO(2) and NH(3) from urea (urease route): step 1/1. This Allorhizobium ampelinum (strain ATCC BAA-846 / DSM 112012 / S4) (Agrobacterium vitis (strain S4)) protein is Urease subunit alpha.